Reading from the N-terminus, the 485-residue chain is Ribulose bisphosphate carboxylase large chain (485 aa).

Residues 1–2 (MS) constitute a propeptide that is removed on maturation. P3 carries the post-translational modification N-acetylproline. Position 14 is an N6,N6,N6-trimethyllysine (K14). 2 residues coordinate substrate: N123 and T173. Catalysis depends on K175, which acts as the Proton acceptor. K177 serves as a coordination point for substrate. Mg(2+) contacts are provided by K201, D203, and E204. K201 carries the N6-carboxylysine modification. H294 serves as the catalytic Proton acceptor. 3 residues coordinate substrate: R295, H327, and S379.

This sequence belongs to the RuBisCO large chain family. Type I subfamily. In terms of assembly, heterohexadecamer of 8 large chains and 8 small chains; disulfide-linked. The disulfide link is formed within the large subunit homodimers. Requires Mg(2+) as cofactor. The disulfide bond which can form in the large chain dimeric partners within the hexadecamer appears to be associated with oxidative stress and protein turnover.

It is found in the plastid. The protein resides in the chloroplast. It carries out the reaction 2 (2R)-3-phosphoglycerate + 2 H(+) = D-ribulose 1,5-bisphosphate + CO2 + H2O. It catalyses the reaction D-ribulose 1,5-bisphosphate + O2 = 2-phosphoglycolate + (2R)-3-phosphoglycerate + 2 H(+). RuBisCO catalyzes two reactions: the carboxylation of D-ribulose 1,5-bisphosphate, the primary event in carbon dioxide fixation, as well as the oxidative fragmentation of the pentose substrate in the photorespiration process. Both reactions occur simultaneously and in competition at the same active site. The protein is Ribulose bisphosphate carboxylase large chain of Bartlettina sordida (Purple torch).